Here is a 526-residue protein sequence, read N- to C-terminus: Probable feruloyl esterase B-2 (526 aa).

The signal sequence occupies residues 1-18 (MTKLSLLPLLALASAVLA). Disulfide bonds link cysteine 27/cysteine 74 and cysteine 62/cysteine 113. Residues asparagine 52, asparagine 97, and asparagine 137 are each glycosylated (N-linked (GlcNAc...) asparagine). 4 cysteine pairs are disulfide-bonded: cysteine 186-cysteine 441, cysteine 255-cysteine 272, cysteine 281-cysteine 291, and cysteine 503-cysteine 525. Serine 187 functions as the Acyl-ester intermediate in the catalytic mechanism. N-linked (GlcNAc...) asparagine glycosylation is present at asparagine 233. Residues aspartate 256, aspartate 259, alanine 261, aspartate 263, and isoleucine 265 each contribute to the Ca(2+) site. An N-linked (GlcNAc...) asparagine glycan is attached at asparagine 311. Catalysis depends on charge relay system residues aspartate 400 and histidine 440. N-linked (GlcNAc...) asparagine glycosylation occurs at asparagine 516.

It belongs to the tannase family.

It is found in the secreted. The catalysed reaction is feruloyl-polysaccharide + H2O = ferulate + polysaccharide.. Functionally, involved in degradation of plant cell walls. Hydrolyzes the feruloyl-arabinose ester bond in arabinoxylans as well as the feruloyl-galactose and feruloyl-arabinose ester bonds in pectin. This chain is Probable feruloyl esterase B-2 (faeB-2), found in Neosartorya fischeri (strain ATCC 1020 / DSM 3700 / CBS 544.65 / FGSC A1164 / JCM 1740 / NRRL 181 / WB 181) (Aspergillus fischerianus).